We begin with the raw amino-acid sequence, 153 residues long: Large ribosomal subunit protein uL15 (153 aa).

Positions 21–41 (RGIGSGKGKTGGRGIKGQKSR) are disordered. Residues 23–35 (IGSGKGKTGGRGI) are compositionally biased toward gly residues.

Belongs to the universal ribosomal protein uL15 family. Part of the 50S ribosomal subunit.

In terms of biological role, binds to the 23S rRNA. This chain is Large ribosomal subunit protein uL15, found in Rickettsia rickettsii (strain Iowa).